Reading from the N-terminus, the 196-residue chain is ATP-dependent Clp protease proteolytic subunit (196 aa).

Catalysis depends on S101, which acts as the Nucleophile. H126 is a catalytic residue.

Belongs to the peptidase S14 family. As to quaternary structure, component of the chloroplastic Clp protease core complex.

It localises to the plastid. The protein localises to the chloroplast stroma. The catalysed reaction is Hydrolysis of proteins to small peptides in the presence of ATP and magnesium. alpha-casein is the usual test substrate. In the absence of ATP, only oligopeptides shorter than five residues are hydrolyzed (such as succinyl-Leu-Tyr-|-NHMec, and Leu-Tyr-Leu-|-Tyr-Trp, in which cleavage of the -Tyr-|-Leu- and -Tyr-|-Trp bonds also occurs).. Cleaves peptides in various proteins in a process that requires ATP hydrolysis. Has a chymotrypsin-like activity. Plays a major role in the degradation of misfolded proteins. This is ATP-dependent Clp protease proteolytic subunit from Citrus sinensis (Sweet orange).